A 576-amino-acid polypeptide reads, in one-letter code: Aspartate--tRNA ligase (576 aa).

L-aspartate is bound at residue E170. The aspartate stretch occupies residues 194 to 197; it reads QLFK. R216 lines the L-aspartate pocket. Residues 216–218 and Q225 each bind ATP; that span reads RDE. H438 serves as a coordination point for L-aspartate. Residue E471 coordinates ATP. An L-aspartate-binding site is contributed by R478. 523–526 contacts ATP; that stretch reads GLDR.

Belongs to the class-II aminoacyl-tRNA synthetase family. Type 1 subfamily. Homodimer.

It is found in the cytoplasm. It catalyses the reaction tRNA(Asp) + L-aspartate + ATP = L-aspartyl-tRNA(Asp) + AMP + diphosphate. Its function is as follows. Catalyzes the attachment of L-aspartate to tRNA(Asp) in a two-step reaction: L-aspartate is first activated by ATP to form Asp-AMP and then transferred to the acceptor end of tRNA(Asp). The chain is Aspartate--tRNA ligase from Fervidobacterium nodosum (strain ATCC 35602 / DSM 5306 / Rt17-B1).